Consider the following 134-residue polypeptide: Small ribosomal subunit protein bS6 (134 aa).

Over residues 113–122 (NRDIKEKEQP) the composition is skewed to basic and acidic residues. The segment at 113–134 (NRDIKEKEQPSESNVDADLKVN) is disordered.

This sequence belongs to the bacterial ribosomal protein bS6 family.

Its function is as follows. Binds together with bS18 to 16S ribosomal RNA. The sequence is that of Small ribosomal subunit protein bS6 from Borrelia duttonii (strain Ly).